A 723-amino-acid polypeptide reads, in one-letter code: Polyribonucleotide nucleotidyltransferase (723 aa).

Mg(2+) contacts are provided by Asp488 and Asp494. Residues 555-614 (PKIITLNIKPEKIKDVIGPGGKQINAIIDETGVKIDIEQDGTVYIASQDQAMNRKAIAII) form the KH domain. Residues 624–692 (GEVYTGKVRR…QQGRVNLSRK (69 aa)) enclose the S1 motif domain. A disordered region spans residues 692–723 (KALLEKKEQPEGDKKPQAEKKFYPKTKKPESK). A compositionally biased stretch (basic and acidic residues) spans 693-723 (ALLEKKEQPEGDKKPQAEKKFYPKTKKPESK).

The protein belongs to the polyribonucleotide nucleotidyltransferase family. The cofactor is Mg(2+).

The protein localises to the cytoplasm. It catalyses the reaction RNA(n+1) + phosphate = RNA(n) + a ribonucleoside 5'-diphosphate. Its function is as follows. Involved in mRNA degradation. Catalyzes the phosphorolysis of single-stranded polyribonucleotides processively in the 3'- to 5'-direction. This Listeria monocytogenes serovar 1/2a (strain ATCC BAA-679 / EGD-e) protein is Polyribonucleotide nucleotidyltransferase.